The following is a 309-amino-acid chain: Zinc transporter ZIP2 (309 aa).

The Extracellular portion of the chain corresponds to 1-8; it reads MEQLLGIK. The chain crosses the membrane as a helical span at residues 9-29; the sequence is LGCLFALLALTLGCGLTPICF. The Cytoplasmic portion of the chain corresponds to 30-46; that stretch reads KWFQIDAARGHHRLVLR. A helical transmembrane segment spans residues 47–67; that stretch reads LLGCISAGVFLGAGFMHMTAE. Topologically, residues 68–103 are extracellular; the sequence is ALEEIESQIQKFMVQNRSASERNSSGDADSAHMEYP. The chain crosses the membrane as a helical span at residues 104–124; the sequence is YGELIISLGFFFVFFLESLAL. At 125 to 164 the chain is on the cytoplasmic side; that stretch reads QCCPGAAGGSTVQDEEWGGAHIFELHSHGHLPSPSKGPLR. The chain crosses the membrane as a helical span at residues 165-185; the sequence is ALVLLLSLSFHSVFEGLAVGL. 2 residues coordinate Zn(2+): His-175 and Glu-179. At 186–189 the chain is on the extracellular side; the sequence is QPTV. Residues 190 to 210 form a helical membrane-spanning segment; it reads AATVQLCLAVLAHKGLVVFGV. His-202 serves as a coordination point for Zn(2+). Residues 211–224 are Cytoplasmic-facing; sequence GMRLVHLGTSSRWA. Residues 225 to 245 traverse the membrane as a helical segment; the sequence is VFSILLLALMSPLGLAVGLAV. The Extracellular portion of the chain corresponds to 246–258; it reads TGGDSEGGRGLAQ. The helical transmembrane segment at 259–279 threads the bilayer; it reads AVLEGVAAGTFLYVTFLEILP. Residue Glu-276 coordinates Zn(2+). The Cytoplasmic portion of the chain corresponds to 280–288; it reads RELASPEAP. A helical transmembrane segment spans residues 289-309; sequence LAKWSCVAAGFAFMAFIALWA.

The protein belongs to the ZIP transporter (TC 2.A.5) family. In terms of tissue distribution, expressed only in prostate and uterine epithelial cells.

It is found in the cell membrane. The catalysed reaction is Zn(2+)(in) = Zn(2+)(out). It catalyses the reaction Cd(2+)(in) = Cd(2+)(out). Activity is increased at acidic pH (6.5). Inhibited in the presence of high extracellular K(+). Functionally, transporter for the divalent cation Zn(2+). Mediates the influx of Zn(2+) into cells from extracellular space. The Zn(2+) uniporter activity is independent of H(+)-driving force, but is modulated by extracellular pH and membrane potential. Also transports other divalent cations Zn(2+), Cd2(+), Cu2(+), Co2(+) in the order of decreasing affinity, respectively. In the skin, aids in the differentiation of keratinocytes in the epidermis. The polypeptide is Zinc transporter ZIP2 (Homo sapiens (Human)).